We begin with the raw amino-acid sequence, 270 residues long: Aliphatic sulfonates import ATP-binding protein SsuB (270 aa).

An ABC transporter domain is found at 17–238; sequence LASSGLRKTF…ARGSHRLAAL (222 aa). Residue 49-56 coordinates ATP; it reads GRSGCGKS. The interval 249–270 is disordered; sequence APGAAPEPDPVAPLPTQLRWAH.

This sequence belongs to the ABC transporter superfamily. Aliphatic sulfonates importer (TC 3.A.1.17.2) family. The complex is composed of two ATP-binding proteins (SsuB), two transmembrane proteins (SsuC) and a solute-binding protein (SsuA).

It localises to the cell inner membrane. It catalyses the reaction ATP + H2O + aliphatic sulfonate-[sulfonate-binding protein]Side 1 = ADP + phosphate + aliphatic sulfonateSide 2 + [sulfonate-binding protein]Side 1.. In terms of biological role, part of the ABC transporter complex SsuABC involved in aliphatic sulfonates import. Responsible for energy coupling to the transport system. The protein is Aliphatic sulfonates import ATP-binding protein SsuB of Pseudomonas putida (Arthrobacter siderocapsulatus).